Reading from the N-terminus, the 103-residue chain is Co-chaperonin GroES (103 aa).

It belongs to the GroES chaperonin family. In terms of assembly, heptamer of 7 subunits arranged in a ring. Interacts with the chaperonin GroEL.

The protein localises to the cytoplasm. Together with the chaperonin GroEL, plays an essential role in assisting protein folding. The GroEL-GroES system forms a nano-cage that allows encapsulation of the non-native substrate proteins and provides a physical environment optimized to promote and accelerate protein folding. GroES binds to the apical surface of the GroEL ring, thereby capping the opening of the GroEL channel. This is Co-chaperonin GroES from Microcystis aeruginosa (strain NIES-843 / IAM M-2473).